The chain runs to 224 residues: UPF0758 protein PD_0117 (224 aa).

The 123-residue stretch at 102–224 (SIHDPISAGR…PVSFAEHGWL (123 aa)) folds into the MPN domain. His-173, His-175, and Asp-186 together coordinate Zn(2+). The JAMM motif motif lies at 173–186 (HNHPSGNREPSPAD).

The protein belongs to the UPF0758 family.

This Xylella fastidiosa (strain Temecula1 / ATCC 700964) protein is UPF0758 protein PD_0117.